The sequence spans 423 residues: Serine--tRNA ligase (423 aa).

230–232 (TAE) serves as a coordination point for L-serine. Position 261-263 (261-263 (RAE)) interacts with ATP. Glu284 is a binding site for L-serine. 348 to 351 (EISS) is a binding site for ATP. Ser384 provides a ligand contact to L-serine.

It belongs to the class-II aminoacyl-tRNA synthetase family. Type-1 seryl-tRNA synthetase subfamily. In terms of assembly, homodimer. The tRNA molecule binds across the dimer.

The protein localises to the cytoplasm. The enzyme catalyses tRNA(Ser) + L-serine + ATP = L-seryl-tRNA(Ser) + AMP + diphosphate + H(+). The catalysed reaction is tRNA(Sec) + L-serine + ATP = L-seryl-tRNA(Sec) + AMP + diphosphate + H(+). The protein operates within aminoacyl-tRNA biosynthesis; selenocysteinyl-tRNA(Sec) biosynthesis; L-seryl-tRNA(Sec) from L-serine and tRNA(Sec): step 1/1. Catalyzes the attachment of serine to tRNA(Ser). Is also able to aminoacylate tRNA(Sec) with serine, to form the misacylated tRNA L-seryl-tRNA(Sec), which will be further converted into selenocysteinyl-tRNA(Sec). The chain is Serine--tRNA ligase from Acetivibrio thermocellus (strain ATCC 27405 / DSM 1237 / JCM 9322 / NBRC 103400 / NCIMB 10682 / NRRL B-4536 / VPI 7372) (Clostridium thermocellum).